Here is a 441-residue protein sequence, read N- to C-terminus: Probable carboxypeptidase NFIA_052450 (441 aa).

A signal peptide spans 1-16 (MKPLSSLLLSAALSAA). N-linked (GlcNAc...) asparagine glycosylation is found at asparagine 88 and asparagine 150. Aspartate 166 is a Zn(2+) binding site. Glutamate 198 serves as the catalytic Proton acceptor. Glutamate 199 provides a ligand contact to Zn(2+). Asparagine 354 and asparagine 373 each carry an N-linked (GlcNAc...) asparagine glycan.

The protein belongs to the peptidase M20A family. Requires Zn(2+) as cofactor.

Its subcellular location is the secreted. The protein is Probable carboxypeptidase NFIA_052450 of Neosartorya fischeri (strain ATCC 1020 / DSM 3700 / CBS 544.65 / FGSC A1164 / JCM 1740 / NRRL 181 / WB 181) (Aspergillus fischerianus).